The chain runs to 556 residues: Putative solute carrier family 22 member 31 (556 aa).

Topologically, residues 1–23 are cytoplasmic; it reads MEQEARVLRAAGGFGRARRLLAS. A helical transmembrane segment spans residues 24-44; sequence ASWVPCIVLGLVLSSEELLTA. Residues 45–128 lie on the Extracellular side of the membrane; it reads QPAPHCRPDP…WNLVCGDGWK (84 aa). The chain crosses the membrane as a helical span at residues 129 to 149; it reads VPLEQVSHLLGWLLGCVILGA. Topologically, residues 150 to 157 are cytoplasmic; it reads GCDRFGRR. Residues 158–178 form a helical membrane-spanning segment; that stretch reads AVFVASLVLTTGLGASEALAA. At 179-182 the chain is on the extracellular side; that stretch reads SFPT. Residues 183-203 traverse the membrane as a helical segment; it reads LLVLRLLHGGTLAGALLALYL. Residues 204–218 lie on the Cytoplasmic side of the membrane; the sequence is ARLELCDPPHRLAFS. A helical transmembrane segment spans residues 219-239; it reads MGAGLFSVVGTLLLPGLAALV. Over 240-246 the chain is Extracellular; that stretch reads QDWRLLQ. Residues 247–267 traverse the membrane as a helical segment; that stretch reads GLGALMSGLLLLFWGFPALFP. Residues 268 to 339 lie on the Cytoplasmic side of the membrane; the sequence is ESPCWLLATG…LRTRVTWRNG (72 aa). Residues 340–357 form a helical membrane-spanning segment; that stretch reads LILGFSSLVGGGIRASFR. The Extracellular portion of the chain corresponds to 358 to 366; sequence RSLAPQVPT. Residues 367 to 387 traverse the membrane as a helical segment; it reads FYLPYFLEAGLEAAALVFLLL. The Cytoplasmic portion of the chain corresponds to 388-395; sequence TADCCGRR. Residues 396 to 416 form a helical membrane-spanning segment; that stretch reads PVLLLGTMVTGLASLLLLAGA. The Extracellular segment spans residues 417–420; the sequence is QYLP. Residues 421-441 traverse the membrane as a helical segment; that stretch reads GWTVLFLSVLGLLASRAVSAL. At 442–448 the chain is on the cytoplasmic side; that stretch reads SSLFAAE. The chain crosses the membrane as a helical span at residues 449–469; sequence VFPTVIRGAGLGLVLGAGFLG. Topologically, residues 470 to 483 are extracellular; that stretch reads QAAGPLDTLHGRQG. Residues 484–504 form a helical membrane-spanning segment; the sequence is FFLQQVVFASLAVLALLCVLL. The Cytoplasmic segment spans residues 505-556; the sequence is LPESRSRGLPQSLQDADRLRRSPLLRGRPRQDHLPLLPPSNSYWAGHTPEQH. Residues 524–556 form a disordered region; sequence RRSPLLRGRPRQDHLPLLPPSNSYWAGHTPEQH.

It belongs to the major facilitator (TC 2.A.1) superfamily. Organic cation transporter (TC 2.A.1.19) family.

It localises to the membrane. Its function is as follows. Organic anion transporter that mediates the uptake of ions. The protein is Putative solute carrier family 22 member 31 of Homo sapiens (Human).